The primary structure comprises 94 residues: Citrate lyase acyl carrier protein (94 aa).

Serine 14 is modified (O-(phosphoribosyl dephospho-coenzyme A)serine).

It belongs to the CitD family. In terms of assembly, oligomer with a subunit composition of (alpha,beta,gamma)6.

The protein localises to the cytoplasm. Covalent carrier of the coenzyme of citrate lyase. In Fusobacterium nucleatum subsp. nucleatum (strain ATCC 25586 / DSM 15643 / BCRC 10681 / CIP 101130 / JCM 8532 / KCTC 2640 / LMG 13131 / VPI 4355), this protein is Citrate lyase acyl carrier protein.